The chain runs to 400 residues: Elongation factor Tu (400 aa).

Residues 10-209 (KEHVNIGTIG…QVDNWIDAPL (200 aa)) enclose the tr-type G domain. A G1 region spans residues 19 to 26 (GHVDHGKT). 19–26 (GHVDHGKT) contributes to the GTP binding site. Thr26 is a binding site for Mg(2+). The G2 stretch occupies residues 61–65 (GITIN). Positions 82 to 85 (DCPG) are G3. Residues 82–86 (DCPGH) and 137–140 (NKVD) each bind GTP. The interval 137–140 (NKVD) is G4. The interval 179–181 (SAL) is G5.

This sequence belongs to the TRAFAC class translation factor GTPase superfamily. Classic translation factor GTPase family. EF-Tu/EF-1A subfamily. As to quaternary structure, monomer.

It localises to the cytoplasm. The enzyme catalyses GTP + H2O = GDP + phosphate + H(+). In terms of biological role, GTP hydrolase that promotes the GTP-dependent binding of aminoacyl-tRNA to the A-site of ribosomes during protein biosynthesis. In Mycoplasma mobile (strain ATCC 43663 / 163K / NCTC 11711) (Mesomycoplasma mobile), this protein is Elongation factor Tu.